The following is a 446-amino-acid chain: Na(+)-translocating NADH-quinone reductase subunit A (446 aa).

Belongs to the NqrA family. As to quaternary structure, composed of six subunits; NqrA, NqrB, NqrC, NqrD, NqrE and NqrF.

It catalyses the reaction a ubiquinone + n Na(+)(in) + NADH + H(+) = a ubiquinol + n Na(+)(out) + NAD(+). In terms of biological role, NQR complex catalyzes the reduction of ubiquinone-1 to ubiquinol by two successive reactions, coupled with the transport of Na(+) ions from the cytoplasm to the periplasm. NqrA to NqrE are probably involved in the second step, the conversion of ubisemiquinone to ubiquinol. The polypeptide is Na(+)-translocating NADH-quinone reductase subunit A (Vibrio atlanticus (strain LGP32) (Vibrio splendidus (strain Mel32))).